Consider the following 157-residue polypeptide: Transcriptional regulator MraZ (157 aa).

2 SpoVT-AbrB domains span residues 7 to 54 (TYEC…PMKE) and 83 to 126 (VRII…DKDL).

Belongs to the MraZ family. Forms oligomers.

It is found in the cytoplasm. The protein localises to the nucleoid. The protein is Transcriptional regulator MraZ of Flavobacterium psychrophilum (strain ATCC 49511 / DSM 21280 / CIP 103535 / JIP02/86).